Here is a 179-residue protein sequence, read N- to C-terminus: MRVVFKLPDELRQELKNPLGELIEGNIPEPYVKAKNIIEGDDGVLITVGDVVTENIMRVGLNPNLAIYDHKTERREYKPRIIINGVLLTVKNPPGTITLPLLKSIKKAYSLILNGKSVHIVVNGEEDLATIPAVLYAPLGATVIYGQPKRGIVLIKVTNECKRRCAKIMRRMEVVRDGD.

GTP-binding residues include D50, V51, V52, D69, K71, and E126.

The protein belongs to the GTP-dependent DPCK family.

It catalyses the reaction 3'-dephospho-CoA + GTP = GDP + CoA + H(+). The protein operates within cofactor biosynthesis; coenzyme A biosynthesis. In terms of biological role, catalyzes the GTP-dependent phosphorylation of the 3'-hydroxyl group of dephosphocoenzyme A to form coenzyme A (CoA). This chain is GTP-dependent dephospho-CoA kinase, found in Pyrococcus horikoshii (strain ATCC 700860 / DSM 12428 / JCM 9974 / NBRC 100139 / OT-3).